The primary structure comprises 349 residues: Probable dual-specificity RNA methyltransferase RlmN (349 aa).

Glu-93 serves as the catalytic Proton acceptor. The 231-residue stretch at 99-329 (YKHGNTICVS…TTIRREMGSD (231 aa)) folds into the Radical SAM core domain. Cys-106 and Cys-334 are oxidised to a cystine. Residues Cys-113, Cys-117, and Cys-120 each contribute to the [4Fe-4S] cluster site. S-adenosyl-L-methionine is bound by residues 160 to 161 (GE), Ser-192, 215 to 217 (SLH), and Asn-291. Cys-334 functions as the S-methylcysteine intermediate in the catalytic mechanism.

The protein belongs to the radical SAM superfamily. RlmN family. The cofactor is [4Fe-4S] cluster.

The protein localises to the cytoplasm. It catalyses the reaction adenosine(2503) in 23S rRNA + 2 reduced [2Fe-2S]-[ferredoxin] + 2 S-adenosyl-L-methionine = 2-methyladenosine(2503) in 23S rRNA + 5'-deoxyadenosine + L-methionine + 2 oxidized [2Fe-2S]-[ferredoxin] + S-adenosyl-L-homocysteine. The enzyme catalyses adenosine(37) in tRNA + 2 reduced [2Fe-2S]-[ferredoxin] + 2 S-adenosyl-L-methionine = 2-methyladenosine(37) in tRNA + 5'-deoxyadenosine + L-methionine + 2 oxidized [2Fe-2S]-[ferredoxin] + S-adenosyl-L-homocysteine. In terms of biological role, specifically methylates position 2 of adenine 2503 in 23S rRNA and position 2 of adenine 37 in tRNAs. The polypeptide is Probable dual-specificity RNA methyltransferase RlmN (Clostridium tetani (strain Massachusetts / E88)).